Consider the following 628-residue polypeptide: MEPKYINTQSFVDSSFFVKLSQLKLDVLKLDQSSRPIHGYYNYKRLAPGQAPAINLNDISFASGQELESQLPARSAFIVSGEITNVNTLEEFKSQSKLEFLTRAGGKIIDSIKNKAALQDPSLLAHFAVFSFADLKKYKFYYWFAFPTLHSEWHITSEGPLGGDAPDSQFSLIRDGKPVPLAQLNAVPTHSPLHVAFVDTSAVPDAYSYVLRNFLTMLAIYGYRDVVVDVHRDNQSSSRQIALKLQSAVDSPKISGWERTSQGKLGPKLADLGALIDPSQLADQAIDLNLKLMKWRIVPTLDLDRIKATKCLLLGSGTLGSYVGRALLAWGVRKITFVDNGKVSFSNPVRQPLFNFIDCLDGGSPKAETAAENMKRIFPLVDAQGFTLEVPMAGHPITDETKQKLDFDRLGELVQNHDVIFLLMDSRETRWLPTVMGNVNNKLVINAALGFESYLVMRHGCINPEKLPEEQQESRLGCYFCNDVYAPSDSTTDRTLDQMCTVTRPGVALMAASLAVELMVSVLQHPDRQYAPHSAQDSCTVLGSLPHQLRGFLHNFEMLKLSAKNFRYCSACSVSVVQEFKSRGWEFVKQALENPKYLEQLTGLTQVHQQAEEAELNFDISDSEGEFD.

The short motif at 315 to 320 is the GXGXXG motif element; the sequence is GSGTLG. Cysteine 500 serves as the catalytic Glycyl thioester intermediate.

This sequence belongs to the ATG7 family. Homodimer.

The protein localises to the cytoplasm. The protein resides in the preautophagosomal structure. Functionally, E1-like activating enzyme involved in the 2 ubiquitin-like systems required for cytoplasm to vacuole transport (Cvt) and autophagy. Activates ATG12 for its conjugation with ATG5 and ATG8 for its conjugation with phosphatidylethanolamine. Both systems are needed for the ATG8 association to Cvt vesicles and autophagosomes membranes. Autophagy is essential for maintenance of amino acid levels and protein synthesis under nitrogen starvation. Required for selective autophagic degradation of the nucleus (nucleophagy) as well as for mitophagy which contributes to regulate mitochondrial quantity and quality by eliminating the mitochondria to a basal level to fulfill cellular energy requirements and preventing excess ROS production. Plays a role in the regulation of filamentous growth and chronological longevity. This chain is Ubiquitin-like modifier-activating enzyme ATG7 (ATG7), found in Pichia angusta (Yeast).